The chain runs to 820 residues: Phospholipase D alpha 3 (820 aa).

One can recognise a C2 domain in the interval 1-133; sequence MTEQLLLHGT…ITGQPIDRWL (133 aa). Aspartate 194 is a Ca(2+) binding site. The PLD phosphodiesterase 1 domain maps to 334-371; the sequence is TMFTHHQKTIVVDSEVDGSLTKRRIVSFLGGIDLCDGR. Catalysis depends on residues histidine 339, lysine 341, and aspartate 346. Histidine 339 contributes to the a 1,2-diacyl-sn-glycero-3-phosphate binding site. Ca(2+) is bound by residues histidine 377 and histidine 411. Residues glutamine 528 and histidine 667 each coordinate a 1,2-diacyl-sn-glycero-3-phosphate. The 28-residue stretch at 662 to 689 folds into the PLD phosphodiesterase 2 domain; sequence FMIYVHSKMMIVDDEYIIIGSANINQRS. Catalysis depends on residues histidine 667, lysine 669, and aspartate 674. Glutamate 730 lines the Ca(2+) pocket.

It belongs to the phospholipase D family. C2-PLD subfamily. Ca(2+) serves as cofactor. As to expression, expressed in buds, flowers, siliques, stems, old leaves and roots. Expressed in the sieve elements.

The protein localises to the cytoplasm. It localises to the membrane. It carries out the reaction a 1,2-diacyl-sn-glycero-3-phosphocholine + H2O = a 1,2-diacyl-sn-glycero-3-phosphate + choline + H(+). In terms of biological role, hydrolyzes glycerol-phospholipids at the terminal phosphodiesteric bond to generate phosphatidic acids (PA). Active with phosphatidylcholine (PC), phosphatidylethanolamine (PE), phosphatidylglycerol (PG), and phosphatidylserine (PS) as substrates. No activity toward phosphatidylinositol (PI) or PIP2. Positively mediates plant responses to hyperosmotic stresses and promotes root growth, flowering, and stress avoidance. Not involved in the abscisic acid regulation of stomatal movement and transpirational water loss. In Arabidopsis thaliana (Mouse-ear cress), this protein is Phospholipase D alpha 3.